Here is a 155-residue protein sequence, read N- to C-terminus: Ribosomal RNA large subunit methyltransferase H (155 aa).

Residues leucine 72, glycine 104, and 123–128 (LSKMTF) each bind S-adenosyl-L-methionine.

This sequence belongs to the RNA methyltransferase RlmH family. Homodimer.

The protein resides in the cytoplasm. It catalyses the reaction pseudouridine(1915) in 23S rRNA + S-adenosyl-L-methionine = N(3)-methylpseudouridine(1915) in 23S rRNA + S-adenosyl-L-homocysteine + H(+). Functionally, specifically methylates the pseudouridine at position 1915 (m3Psi1915) in 23S rRNA. The chain is Ribosomal RNA large subunit methyltransferase H from Cytophaga hutchinsonii (strain ATCC 33406 / DSM 1761 / CIP 103989 / NBRC 15051 / NCIMB 9469 / D465).